The sequence spans 90 residues: Hypnin-A3 (90 aa).

Lectin specific for core(alpha 1-6)fucosylated N-glycans. Inhibits platelet aggregation. In Hypnea japonica (Japanese red alga), this protein is Hypnin-A3.